The chain runs to 586 residues: Putative ABC transporter ATP-binding protein MG187 homolog (586 aa).

Residues 13–464 (IEFKNIVVDF…PANEFVATFL (452 aa)) enclose the ABC transporter domain. 45 to 52 (GPSGCGKT) contacts ATP.

Belongs to the ABC transporter superfamily.

The polypeptide is Putative ABC transporter ATP-binding protein MG187 homolog (Mycoplasma pneumoniae (strain ATCC 29342 / M129 / Subtype 1) (Mycoplasmoides pneumoniae)).